We begin with the raw amino-acid sequence, 1545 residues long: ATP-binding cassette sub-family C member 9 (1545 aa).

Over M1–N30 the chain is Extracellular. N-linked (GlcNAc...) asparagine glycosylation is present at N9. The chain crosses the membrane as a helical span at residues L31–S51. Over Q52–R72 the chain is Cytoplasmic. Residues W73–S93 traverse the membrane as a helical segment. Residues D94–H101 lie on the Extracellular side of the membrane. Residues L102–Y122 form a helical membrane-spanning segment. The Cytoplasmic segment spans residues H123–K132. Residues L133–V153 traverse the membrane as a helical segment. At K154 to F167 the chain is on the extracellular side. The helical transmembrane segment at C168–I188 threads the bilayer. Over R189–S301 the chain is Cytoplasmic. The 298-residue stretch at I297–K594 folds into the ABC transmembrane type-1 1 domain. A helical transmembrane segment spans residues T302–V322. The Extracellular segment spans residues Q323–N347. N-linked (GlcNAc...) asparagine glycans are attached at residues N330 and N331. The helical transmembrane segment at A348–A368 threads the bilayer. The Cytoplasmic portion of the chain corresponds to S369–Q420. A helical membrane pass occupies residues L421–G441. At V442 to S452 the chain is on the extracellular side. The helical transmembrane segment at A453–K473 threads the bilayer. The Cytoplasmic portion of the chain corresponds to L474–T528. The helical transmembrane segment at F529–L549 threads the bilayer. At A550–A568 the chain is on the extracellular side. A helical membrane pass occupies residues F569–V589. At R590–G986 the chain is on the cytoplasmic side. One can recognise an ABC transporter 1 domain in the interval I668–T908. Residue G701–S708 participates in ATP binding. The tract at residues R940–M963 is disordered. Residues E947–N962 are compositionally biased toward acidic residues. Residues F987 to I1007 traverse the membrane as a helical segment. In terms of domain architecture, ABC transmembrane type-1 2 spans L990–V1270. Topologically, residues D1008–F1030 are extracellular. A helical transmembrane segment spans residues Y1031–L1051. Topologically, residues T1052–M1123 are cytoplasmic. The helical transmembrane segment at I1124–F1144 threads the bilayer. At I1145–S1241 the chain is on the extracellular side. The chain crosses the membrane as a helical span at residues G1242 to V1262. Topologically, residues R1263–K1545 are cytoplasmic. The region spanning I1308 to M1542 is the ABC transporter 2 domain. Position 1342 to 1349 (G1342 to S1349) interacts with ATP.

This sequence belongs to the ABC transporter superfamily. ABCC family. Conjugate transporter (TC 3.A.1.208) subfamily. Interacts with KCNJ11. Interacts with KCNJ8. As to expression, expressed at high levels in heart, skeletal muscle and ovary. Moderate levels are found in brain, tongue and pancreatic islets. Low levels are found in lung, testis and adrenal gland. Expressed at very low levels in stomach, colon, thyroid and pituitary.

It localises to the membrane. Subunit of ATP-sensitive potassium channels (KATP). Can form cardiac and smooth muscle-type KATP channels with KCNJ11. KCNJ11 forms the channel pore while ABCC9 is required for activation and regulation. Can form a sulfonylurea-sensitive but ATP-insensitive potassium channel with KCNJ8. This is ATP-binding cassette sub-family C member 9 (Abcc9) from Rattus norvegicus (Rat).